Reading from the N-terminus, the 507-residue chain is ATP synthase subunit alpha, chloroplastic (507 aa).

170-177 (GDRQTGKA) contacts ATP.

This sequence belongs to the ATPase alpha/beta chains family. In terms of assembly, F-type ATPases have 2 components, CF(1) - the catalytic core - and CF(0) - the membrane proton channel. CF(1) has five subunits: alpha(3), beta(3), gamma(1), delta(1), epsilon(1). CF(0) has four main subunits: a, b, b' and c.

The protein resides in the plastid. Its subcellular location is the chloroplast thylakoid membrane. It carries out the reaction ATP + H2O + 4 H(+)(in) = ADP + phosphate + 5 H(+)(out). Its function is as follows. Produces ATP from ADP in the presence of a proton gradient across the membrane. The alpha chain is a regulatory subunit. This is ATP synthase subunit alpha, chloroplastic from Calycanthus floridus var. glaucus (Eastern sweetshrub).